A 418-amino-acid chain; its full sequence is Actin-related protein 3-A (418 aa).

The protein belongs to the actin family. ARP3 subfamily. As to quaternary structure, component of the Arp2/3 complex composed of actr2/arp2, actr3/arp3, arpc1 (arpc1a or arpc1b), arpc2, arpc3, arpc4 and arpc5.

It is found in the cytoplasm. Its subcellular location is the cytoskeleton. The protein resides in the cell projection. It localises to the nucleus. Functionally, ATP-binding component of the Arp2/3 complex, a multiprotein complex that mediates actin polymerization upon stimulation by nucleation-promoting factor (NPF). The Arp2/3 complex mediates the formation of branched actin networks in the cytoplasm, providing the force for cell motility. Seems to contact the pointed end of the daughter actin filament. In addition to its role in the cytoplasmic cytoskeleton, the Arp2/3 complex also promotes actin polymerization in the nucleus, thereby regulating gene transcription and repair of damaged DNA. The Arp2/3 complex promotes homologous recombination (HR) repair in response to DNA damage by promoting nuclear actin polymerization, leading to drive motility of double-strand breaks (DSBs). This chain is Actin-related protein 3-A, found in Xenopus laevis (African clawed frog).